We begin with the raw amino-acid sequence, 228 residues long: Sodium channel regulatory subunit beta-4 (228 aa).

The N-terminal stretch at 1-30 is a signal peptide; it reads MSRAGNRGNTQARWLGTGLLGLFLLPMYLS. An Ig-like C2-type domain is found at 31–148; that stretch reads LEVSVGKATT…KDLNNSATIF (118 aa). The Extracellular portion of the chain corresponds to 31-161; sequence LEVSVGKATT…VDKLEKVDNT (131 aa). N-linked (GlcNAc...) asparagine glycosylation is found at asparagine 45, asparagine 71, asparagine 113, and asparagine 142. Cysteines 53 and 131 form a disulfide. A helical transmembrane segment spans residues 162 to 182; that stretch reads VTLIILAVVGGVIGLLVCILL. The Cytoplasmic segment spans residues 183-228; that stretch reads LKKLITFILKKTREKKKECLVSSSGNDNTENGLPGSKAEEKPPTKV. The interval 199 to 228 is disordered; the sequence is KECLVSSSGNDNTENGLPGSKAEEKPPTKV. The segment covering 203–213 has biased composition (polar residues); the sequence is VSSSGNDNTEN. Residues 219 to 228 are compositionally biased toward basic and acidic residues; sequence KAEEKPPTKV.

The protein belongs to the sodium channel auxiliary subunit SCN4B (TC 8.A.17) family. As to quaternary structure, a voltage-gated sodium (Nav) channel consists of an ion-conducting pore-forming alpha subunit functional on its own that is regulated by one or more beta subunits. The beta subunit SCN4B is disulfide-linked to the pore-forming alpha subunit. Interacts with SCN1A; regulatory subunit of SCN1A/Nav1.1. Interacts with SCN2A; regulatory subunit of SCN2A/Nav1.2. In terms of processing, contains an interchain disulfide bond with SCN2A.

Its subcellular location is the cell membrane. Regulatory subunit of multiple voltage-gated sodium (Nav) channels directly mediating the depolarization of excitable membranes. Navs, also called VGSCs (voltage-gated sodium channels) or VDSCs (voltage-dependent sodium channels), operate by switching between closed and open conformations depending on the voltage difference across the membrane. In the open conformation they allow Na(+) ions to selectively pass through the pore, along their electrochemical gradient. The influx of Na+ ions provokes membrane depolarization, initiating the propagation of electrical signals throughout cells and tissues. The accessory beta subunits participate in localization and functional modulation of the Nav channels. Modulates the activity of SCN1A/Nav1.1. Modulates the activity of SCN2A/Nav1.2. The protein is Sodium channel regulatory subunit beta-4 of Mus musculus (Mouse).